The sequence spans 266 residues: Enterotoxin type C-1 (266 aa).

Residues 1–27 (MNKSRFISCVILIFALILVLFTPNVLA) form the signal peptide. Cys-120 and Cys-137 are disulfide-bonded.

Belongs to the staphylococcal/streptococcal toxin family. Interacts with host MHC class II molecules composed of alpha/HLA-DRA and beta/HLA-DRB1 chains.

It is found in the secreted. In terms of biological role, staphylococcal enterotoxin that activates the host immune system by binding as unprocessed molecules to major histocompatibility (MHC) complex class II and T-cell receptor (TCR) molecules. In turn, this ternary complex activates a large number of T-lymphocytes initiating a systemic release of pro-inflammatory cytokines. Inhibits SEC1-mediated T-cell activation in the absence of MHC class II by competing with SEC1 for binding to the host TCR. Also causes the intoxication staphylococcal food poisoning syndrome. The chain is Enterotoxin type C-1 (entC1) from Staphylococcus aureus.